We begin with the raw amino-acid sequence, 316 residues long: Protease HtpX homolog (316 aa).

A helical membrane pass occupies residues 16–36; that stretch reads LFMGAGFLIGGATGMMIALVF. Residue H134 participates in Zn(2+) binding. Residue E135 is part of the active site. H138 serves as a coordination point for Zn(2+). 2 helical membrane passes run 149 to 169 and 180 to 200; these read VTATIAGAISALANFAFFFGG and LGGMIGAILIAILAPIAAMLV. A Zn(2+)-binding site is contributed by E209. Residues 295–316 are disordered; the sequence is PVMAATTSSSVPLSGERGGPWS.

The protein belongs to the peptidase M48B family. Zn(2+) is required as a cofactor.

The protein localises to the cell inner membrane. The protein is Protease HtpX homolog of Caulobacter vibrioides (strain ATCC 19089 / CIP 103742 / CB 15) (Caulobacter crescentus).